Consider the following 214-residue polypeptide: Pyridoxine/pyridoxamine 5'-phosphate oxidase (214 aa).

Substrate-binding positions include 8–11 and K66; that span reads RTNY. FMN contacts are provided by residues 61–66, 76–77, R82, K83, and Q105; these read RIVLIK and FT. The substrate site is built by Y123, R127, and S131. FMN contacts are provided by residues 140–141 and W184; that span reads QS. 190–192 serves as a coordination point for substrate; sequence RLH. Residue R194 participates in FMN binding.

This sequence belongs to the pyridoxamine 5'-phosphate oxidase family. Homodimer. It depends on FMN as a cofactor.

It carries out the reaction pyridoxamine 5'-phosphate + O2 + H2O = pyridoxal 5'-phosphate + H2O2 + NH4(+). It catalyses the reaction pyridoxine 5'-phosphate + O2 = pyridoxal 5'-phosphate + H2O2. It functions in the pathway cofactor metabolism; pyridoxal 5'-phosphate salvage; pyridoxal 5'-phosphate from pyridoxamine 5'-phosphate: step 1/1. It participates in cofactor metabolism; pyridoxal 5'-phosphate salvage; pyridoxal 5'-phosphate from pyridoxine 5'-phosphate: step 1/1. Its function is as follows. Catalyzes the oxidation of either pyridoxine 5'-phosphate (PNP) or pyridoxamine 5'-phosphate (PMP) into pyridoxal 5'-phosphate (PLP). This is Pyridoxine/pyridoxamine 5'-phosphate oxidase from Burkholderia thailandensis (strain ATCC 700388 / DSM 13276 / CCUG 48851 / CIP 106301 / E264).